The following is a 371-amino-acid chain: Putative agmatine deiminase (371 aa).

Catalysis depends on cysteine 361, which acts as the Amidino-cysteine intermediate.

This sequence belongs to the agmatine deiminase family.

The enzyme catalyses agmatine + H2O = N-carbamoylputrescine + NH4(+). The sequence is that of Putative agmatine deiminase from Selenomonas ruminantium.